A 206-amino-acid polypeptide reads, in one-letter code: Superoxide dismutase [Mn] (206 aa).

Mn(2+)-binding residues include histidine 27, histidine 82, aspartate 168, and histidine 172.

Belongs to the iron/manganese superoxide dismutase family. In terms of assembly, homodimer. The cofactor is Mn(2+).

The enzyme catalyses 2 superoxide + 2 H(+) = H2O2 + O2. In terms of biological role, destroys superoxide anion radicals which are normally produced within the cells and which are toxic to biological systems. In Escherichia coli (strain K12), this protein is Superoxide dismutase [Mn] (sodA).